A 482-amino-acid polypeptide reads, in one-letter code: tRNA sulfurtransferase (482 aa).

A THUMP domain is found at 61-165; the sequence is LAIRDALTRI…DDRLLLIKGR (105 aa). Residues 183-184, K265, G287, and Q296 contribute to the ATP site; that span reads LI. C344 and C456 are disulfide-bonded. Positions 404–482 constitute a Rhodanese domain; sequence FGPNDVILDI…GFANVKVYRP (79 aa). C456 functions as the Cysteine persulfide intermediate in the catalytic mechanism.

This sequence belongs to the ThiI family.

The protein resides in the cytoplasm. It catalyses the reaction [ThiI sulfur-carrier protein]-S-sulfanyl-L-cysteine + a uridine in tRNA + 2 reduced [2Fe-2S]-[ferredoxin] + ATP + H(+) = [ThiI sulfur-carrier protein]-L-cysteine + a 4-thiouridine in tRNA + 2 oxidized [2Fe-2S]-[ferredoxin] + AMP + diphosphate. The catalysed reaction is [ThiS sulfur-carrier protein]-C-terminal Gly-Gly-AMP + S-sulfanyl-L-cysteinyl-[cysteine desulfurase] + AH2 = [ThiS sulfur-carrier protein]-C-terminal-Gly-aminoethanethioate + L-cysteinyl-[cysteine desulfurase] + A + AMP + 2 H(+). It functions in the pathway cofactor biosynthesis; thiamine diphosphate biosynthesis. Functionally, catalyzes the ATP-dependent transfer of a sulfur to tRNA to produce 4-thiouridine in position 8 of tRNAs, which functions as a near-UV photosensor. Also catalyzes the transfer of sulfur to the sulfur carrier protein ThiS, forming ThiS-thiocarboxylate. This is a step in the synthesis of thiazole, in the thiamine biosynthesis pathway. The sulfur is donated as persulfide by IscS. This Salmonella choleraesuis (strain SC-B67) protein is tRNA sulfurtransferase.